Reading from the N-terminus, the 303-residue chain is Taste receptor type 2 member 13 (303 aa).

Topologically, residues 1–7 (MESALPS) are extracellular. A helical transmembrane segment spans residues 8–28 (IFTLVIIAEFIIGNLSNGFIV). Residues 29 to 55 (LINCIDWVSKRELSSVDKLLIILAISR) are Cytoplasmic-facing. Residues 56–76 (IGLIWEILVSWFLALHSLAIF) form a helical membrane-spanning segment. The Extracellular segment spans residues 77 to 85 (VSGTGLRIM). A helical transmembrane segment spans residues 86–106 (IFSWIVSNHFNLWLATILSIF). At 107–128 (YLLKIASFSSPAFLYLKRRVNK) the chain is on the cytoplasmic side. A helical membrane pass occupies residues 129–149 (VILMILLGTLVFLFLNLIQIN). Residues 150–184 (MLIKDWLDRYERNTTWNFSMSDFETFSVSVRFTMT) are Extracellular-facing. N-linked (GlcNAc...) asparagine glycans are attached at residues Asn162 and Asn166. Residues 185-205 (MFSLTPFTVAFISFLLLVFSL) traverse the membrane as a helical segment. The Cytoplasmic portion of the chain corresponds to 206–232 (QKHLQKMQLNYKGHRDPRTKVHTNALK). The helical transmembrane segment at 233 to 253 (IVISFLLLYASFFLSILISWI) threads the bilayer. The Extracellular portion of the chain corresponds to 254 to 261 (SELYQNTV). The chain crosses the membrane as a helical span at residues 262-282 (IYMLCETIGAFYPSSHSFLLI). Over 283-303 (LGNAKLRQAFLLVAAKVWAKR) the chain is Cytoplasmic.

This sequence belongs to the G-protein coupled receptor T2R family.

It localises to the membrane. Functionally, receptor that may play a role in the perception of bitterness and is gustducin-linked. May play a role in sensing the chemical composition of the gastrointestinal content. The activity of this receptor may stimulate alpha gustducin, mediate PLC-beta-2 activation and lead to the gating of TRPM5. This is Taste receptor type 2 member 13 (TAS2R13) from Pan troglodytes (Chimpanzee).